Consider the following 325-residue polypeptide: Flavin-dependent thymidylate synthase (325 aa).

The ThyX domain occupies Ile12 to Ser267. FAD contacts are provided by residues Ser65, Arg89–Arg91, and Gln97. DUMP is bound by residues Gln86–Arg89 and Gln97–Arg101. Positions Arg89 to Ser99 match the ThyX motif motif. The interval Ala110 to Ile159 is insert. Residue Arg205 coordinates dUMP. Residue Asn221–Arg223 coordinates FAD. Residue Arg233 participates in dUMP binding. Arg233 acts as the Involved in ionization of N3 of dUMP, leading to its activation in catalysis.

It belongs to the thymidylate synthase ThyX family. Homotetramer. The cofactor is FAD.

The catalysed reaction is dUMP + (6R)-5,10-methylene-5,6,7,8-tetrahydrofolate + NADPH + H(+) = dTMP + (6S)-5,6,7,8-tetrahydrofolate + NADP(+). Its pathway is pyrimidine metabolism; dTTP biosynthesis. Functionally, catalyzes the reductive methylation of 2'-deoxyuridine-5'-monophosphate (dUMP) to 2'-deoxythymidine-5'-monophosphate (dTMP) while utilizing 5,10-methylenetetrahydrofolate (mTHF) as the methyl donor, and NADPH and FADH(2) as the reductant. The sequence is that of Flavin-dependent thymidylate synthase from Aeropyrum pernix (strain ATCC 700893 / DSM 11879 / JCM 9820 / NBRC 100138 / K1).